A 229-amino-acid polypeptide reads, in one-letter code: Germin-like protein 2-4 (229 aa).

Positions 1–23 (MAHRRRCLLLLLAVLLPAMAARG) are cleaved as a signal peptide. A disulfide bond links cysteine 32 and cysteine 52. A glycan (N-linked (GlcNAc...) asparagine) is linked at asparagine 57. In terms of domain architecture, Cupin type-1 spans 66–213 (SGVRAAGNFS…AFGLTPAELR (148 aa)). Mn(2+) is bound by residues histidine 115, histidine 117, glutamate 122, and histidine 161.

Belongs to the germin family. As to quaternary structure, oligomer (believed to be a pentamer but probably hexamer).

It localises to the secreted. It is found in the extracellular space. The protein resides in the apoplast. In terms of biological role, may play a role in plant defense. Probably has no oxalate oxidase activity even if the active site is conserved. The polypeptide is Germin-like protein 2-4 (Oryza sativa subsp. japonica (Rice)).